We begin with the raw amino-acid sequence, 417 residues long: Senescence-associated protein AAF, chloroplastic (417 aa).

Residues 1–36 (MALNVSKVVPNSPILVKSVNASRSRRVLLAYVHHPL) constitute a chloroplast transit peptide.

This sequence belongs to the ATA15/OSA15 family. In terms of tissue distribution, expressed in leaves. Expressed in 7-day-old seedlings, roots, rosette leaves, cauline leaves and flower buds.

It is found in the plastid. Its subcellular location is the chloroplast. In terms of biological role, involved in modulation of redox homeostasis to regulate leaf senescence mediated by age and stress factors during plant development. Its function is dependent of EIN2, a central factor of ethylene signaling. In Arabidopsis thaliana (Mouse-ear cress), this protein is Senescence-associated protein AAF, chloroplastic.